The sequence spans 304 residues: Putative S-adenosyl-L-methionine-dependent methyltransferase YktD (304 aa).

Residues D134 and 163-164 (DF) contribute to the S-adenosyl-L-methionine site.

This sequence belongs to the UPF0677 family.

Its function is as follows. May be involved in polyketide synthesis. This is Putative S-adenosyl-L-methionine-dependent methyltransferase YktD (yktD) from Bacillus subtilis (strain 168).